A 246-amino-acid chain; its full sequence is Probable transcriptional regulatory protein WD_0484 (246 aa).

A disordered region spans residues 1-22 (MAGHSQFSNIKHRKGAQDAKRS).

Belongs to the TACO1 family.

The protein localises to the cytoplasm. The chain is Probable transcriptional regulatory protein WD_0484 from Wolbachia pipientis wMel.